The sequence spans 412 residues: [Pyruvate dehydrogenase (acetyl-transferring)] kinase isozyme 4, mitochondrial (412 aa).

In terms of domain architecture, Histidine kinase spans 138–368 (ILEYKDTCTV…DAIIYLKALS (231 aa)). Residues 254–261 (ELFKNAMR), D293, 312–313 (ST), and 329–334 (GFGYGL) each bind ATP.

This sequence belongs to the PDK/BCKDK protein kinase family. Homodimer. Interacts with the pyruvate dehydrogenase complex subunit DLAT, and is part of the multimeric pyruvate dehydrogenase complex that contains multiple copies of pyruvate dehydrogenase (E1), dihydrolipoamide acetyltransferase (DLAT, E2) and lipoamide dehydrogenase (DLD, E3). As to expression, detected in skeletal muscle and heart.

It localises to the mitochondrion matrix. The enzyme catalyses L-seryl-[pyruvate dehydrogenase E1 alpha subunit] + ATP = O-phospho-L-seryl-[pyruvate dehydrogenase E1 alpha subunit] + ADP + H(+). Functionally, kinase that plays a key role in regulation of glucose and fatty acid metabolism and homeostasis via phosphorylation of the pyruvate dehydrogenase subunits PDHA1 and PDHA2. This inhibits pyruvate dehydrogenase activity, and thereby regulates metabolite flux through the tricarboxylic acid cycle, down-regulates aerobic respiration and inhibits the formation of acetyl-coenzyme A from pyruvate. Inhibition of pyruvate dehydrogenase decreases glucose utilization and increases fat metabolism in response to prolonged fasting and starvation. Plays an important role in maintaining normal blood glucose levels under starvation, and is involved in the insulin signaling cascade. Via its regulation of pyruvate dehydrogenase activity, plays an important role in maintaining normal blood pH and in preventing the accumulation of ketone bodies under starvation. In the fed state, mediates cellular responses to glucose levels and to a high-fat diet. Regulates both fatty acid oxidation and de novo fatty acid biosynthesis. Plays a role in the generation of reactive oxygen species. Protects detached epithelial cells against anoikis. Plays a role in cell proliferation via its role in regulating carbohydrate and fatty acid metabolism. The polypeptide is [Pyruvate dehydrogenase (acetyl-transferring)] kinase isozyme 4, mitochondrial (PDK4) (Ictidomys tridecemlineatus (Thirteen-lined ground squirrel)).